The sequence spans 358 residues: DNA-directed RNA polymerase subunit alpha (358 aa).

An alpha N-terminal domain (alpha-NTD) region spans residues 1-244; that stretch reads MENKLFSCIE…NLFLSIYDTS (244 aa). The segment at 287–358 is alpha C-terminal domain (alpha-CTD); that stretch reads YKTSFDKNLT…KMVKYGTVNK (72 aa).

It belongs to the RNA polymerase alpha chain family. As to quaternary structure, homodimer. The RNAP catalytic core consists of 2 alpha, 1 beta, 1 beta' and 1 omega subunit. When a sigma factor is associated with the core the holoenzyme is formed, which can initiate transcription.

The protein resides in the plastid. It localises to the chloroplast. It catalyses the reaction RNA(n) + a ribonucleoside 5'-triphosphate = RNA(n+1) + diphosphate. In terms of biological role, DNA-dependent RNA polymerase catalyzes the transcription of DNA into RNA using the four ribonucleoside triphosphates as substrates. The protein is DNA-directed RNA polymerase subunit alpha (rpoA) of Bigelowiella natans (Pedinomonas minutissima).